The chain runs to 219 residues: MATTFEQMRANVGKLLRGIDRYNPENLATLERYVDTQARENAYDLEANLAVLKLYQFNLAYFQTTVTAQILLKALTNLPHTDFTLCKCMIDQTHQEERPIRQILYLGNLLETCHFQSFWASLEENRDLIDGITGFEESVRKFICHVVGITYQNIEYRLLAEMLGDPLDTQVKVWMNKYGWTENEDGQIFIHNQEESVKPKNIVEKIDFESVSSIMATSQ.

In terms of domain architecture, PCI spans 43-205 (YDLEANLAVL…SVKPKNIVEK (163 aa)).

This sequence belongs to the eIF-3 subunit K family. In terms of assembly, component of the eukaryotic translation initiation factor 3 (eIF-3) complex, which is composed of 13 subunits: eif3a, eif3b, eif3c, eif3d, eif3e, eif3f, eif3g, eif3h, eif3i, eif3j, eif3k, eif3l and eif3m.

Its subcellular location is the nucleus. The protein localises to the cytoplasm. In terms of biological role, component of the eukaryotic translation initiation factor 3 (eIF-3) complex, which is involved in protein synthesis of a specialized repertoire of mRNAs and, together with other initiation factors, stimulates binding of mRNA and methionyl-tRNAi to the 40S ribosome. The eIF-3 complex specifically targets and initiates translation of a subset of mRNAs involved in cell proliferation. This Danio rerio (Zebrafish) protein is Eukaryotic translation initiation factor 3 subunit K (eif3k).